A 360-amino-acid polypeptide reads, in one-letter code: Farnesyl pyrophosphate synthase (360 aa).

The isopentenyl diphosphate site is built by lysine 52, arginine 55, and glutamine 90. Mg(2+) is bound by residues aspartate 97 and aspartate 101. Dimethylallyl diphosphate is bound at residue arginine 106. Arginine 107 contributes to the isopentenyl diphosphate binding site. The dimethylallyl diphosphate site is built by lysine 194, threonine 195, glutamine 237, lysine 254, and lysine 263.

The protein belongs to the FPP/GGPP synthase family. The cofactor is Mg(2+).

The catalysed reaction is isopentenyl diphosphate + dimethylallyl diphosphate = (2E)-geranyl diphosphate + diphosphate. It carries out the reaction isopentenyl diphosphate + (2E)-geranyl diphosphate = (2E,6E)-farnesyl diphosphate + diphosphate. It functions in the pathway isoprenoid biosynthesis; farnesyl diphosphate biosynthesis; farnesyl diphosphate from geranyl diphosphate and isopentenyl diphosphate: step 1/1. Its pathway is isoprenoid biosynthesis; geranyl diphosphate biosynthesis; geranyl diphosphate from dimethylallyl diphosphate and isopentenyl diphosphate: step 1/1. Farnesyl pyrophosphate synthase; part of the second module of ergosterol biosynthesis pathway that includes the middle steps of the pathway. The second module involves the formation of farnesyl diphosphate, which is also an important intermediate in the biosynthesis of ubiquinone, dolichol, heme and prenylated proteins. This module also plays a key role in the biosynthesis of triterpenes such as ganoderic acids (GA), a group of highly oxygenated lanostane-type triterpenoids which are well recognized as a main group of unique bioactive compounds in the medicinal mushroom Ganoderma lucidum. Activity by the mevalonate kinase first converts mevalonate into 5-phosphomevalonate. 5-phosphomevalonate is then further converted to 5-diphosphomevalonate by the phosphomevalonate kinase. The diphosphomevalonate decarboxylase MVD then produces isopentenyl diphosphate. The isopentenyl-diphosphate delta-isomerase then catalyzes the 1,3-allylic rearrangement of the homoallylic substrate isopentenyl (IPP) to its highly electrophilic allylic isomer, dimethylallyl diphosphate (DMAPP). Finally the farnesyl diphosphate synthase FPS catalyzes the sequential condensation of isopentenyl pyrophosphate with dimethylallyl pyrophosphate, and then with the resultant geranylpyrophosphate to the ultimate product farnesyl pyrophosphate. This is Farnesyl pyrophosphate synthase from Ganoderma lucidum (Ling zhi medicinal fungus).